We begin with the raw amino-acid sequence, 473 residues long: GDP-fucose protein O-fucosyltransferase 2 (473 aa).

The signal sequence occupies residues 1–25 (MKNMIYNLISISLYSLIIILTDIYA). Residues 59–63 (GEGFN), 283–285 (HLR), and 379–380 (RF) each bind GDP-beta-L-fucose. E60 (proton acceptor) is an active-site residue.

It belongs to the glycosyltransferase 68 family.

Its subcellular location is the endoplasmic reticulum. The catalysed reaction is L-seryl-[protein] + GDP-beta-L-fucose = 3-O-(alpha-L-fucosyl)-L-seryl-[protein] + GDP + H(+). The enzyme catalyses L-threonyl-[protein] + GDP-beta-L-fucose = 3-O-(alpha-L-fucosyl)-L-threonyl-[protein] + GDP + H(+). It functions in the pathway protein modification; protein glycosylation. In terms of biological role, catalyzes the reaction that attaches fucose through an O-glycosidic linkage to a conserved serine or threonine residue in the consensus sequence C1-X-X-S/T-C2 of thrombospondin type I repeats (TSRs) where C1 and C2 are the first and second cysteines of the repeat, respectively. O-fucosylates sporozoite proteins CSP and TRAP. O-fucosylation regulates stability and intracellular trafficking of TRAP but not of CSP. Dispensable for parasite transmission to the mosquito vector and/or infection of the vertebrate host hepatocytes. In Plasmodium berghei (strain Anka), this protein is GDP-fucose protein O-fucosyltransferase 2.